The primary structure comprises 70 residues: Large ribosomal subunit protein bL31 (70 aa).

Cys16, Cys18, Cys37, and Cys40 together coordinate Zn(2+).

Belongs to the bacterial ribosomal protein bL31 family. Type A subfamily. As to quaternary structure, part of the 50S ribosomal subunit. Zn(2+) serves as cofactor.

Binds the 23S rRNA. The chain is Large ribosomal subunit protein bL31 from Shewanella denitrificans (strain OS217 / ATCC BAA-1090 / DSM 15013).